The chain runs to 229 residues: Cytidylate kinase (229 aa).

Gly-10–Thr-18 contacts ATP.

The protein belongs to the cytidylate kinase family. Type 1 subfamily.

The protein localises to the cytoplasm. It catalyses the reaction CMP + ATP = CDP + ADP. The catalysed reaction is dCMP + ATP = dCDP + ADP. This Leptospira interrogans serogroup Icterohaemorrhagiae serovar Lai (strain 56601) protein is Cytidylate kinase.